Reading from the N-terminus, the 442-residue chain is Tyrosine-protein kinase transforming protein RYK (442 aa).

The region spanning 45-316 (LSLGKVLGEG…QLKVHLEKLL (272 aa)) is the Protein kinase domain. ATP is bound by residues 51-59 (LGEGEFGSV) and Lys-77. The active-site Proton acceptor is Asp-181. Tyr-212 is modified (phosphotyrosine; by autocatalysis).

The protein belongs to the protein kinase superfamily. Tyr protein kinase family. AXL/UFO subfamily.

It is found in the host cell membrane. The catalysed reaction is L-tyrosyl-[protein] + ATP = O-phospho-L-tyrosyl-[protein] + ADP + H(+). The sequence is that of Tyrosine-protein kinase transforming protein RYK (V-RYK) from Avian retrovirus RPL30.